The chain runs to 685 residues: MDRVTRYPILGIPQAHRGTGLVLDGDTSYTYHLVCTGPEASGWGQDEPQTWPTDYKAQQGVLRQGVSYSVRAYPGQPSPRGLHLETGEDEGLKVYRLGARDAHQGRPTWAVHPEDGEDEEMKTYRLDAGDAVPRGLCDLERERWAIIQGQAVRKSGTVATLQAAPDHGDPRTPGPPRSTPLEENVVDREQIDFLAARQQFLSLEQANKEVPHSSPARGTPAGPSPGVSQAPKAFNKPHLVNGHVVPTKPQGKGVFREENKVRAVPAWASVQVADDPGSLAPVESPGTPKETPIEREIRLAQEREADLREQRGLRRAADHQELVEIPSRPLLTKVSLITAPRRERGRPSLYVQRDMVQETQREEDHRREGLHVGRASTPDWVSEDPQPGLRRALSSDSILSPDSILSPAPDARAADPAPEVRKVNRIPPDAYQPYLSPGTPQLEPSAFGAFSKPSGLSTVDTEAATSPKATMSPRHLSESSGKPMSTKQEPWKLPRGSPQANRGVVRWEYFRLRPLQFRAPDEPQQAQVPHVWGWEVAGAPALRLQKSQSSDLLERERESVLRREREVAEERRNALFPEVFSPTPDESCDQNSRSSSQASGITGSYSVSESPFFSPIRLHSSLAWTVEDPVDSAPPGQRKKEQWYAGINPSDGINSEVLEAIRVTRHKNTMAERWESRIYASEEDD.

Serine 78 carries the phosphoserine; by CDK1 modification. 2 disordered regions span residues 155–181 and 207–253; these read SGTV…STPL and NKEV…QGKG. Position 172 is a phosphothreonine; by CDK1 (threonine 172). Threonine 179 is modified (phosphothreonine). Serine 214 is modified (phosphoserine; by CDK1). A Phosphothreonine modification is found at threonine 219. A Phosphoserine; by CDK1 modification is found at serine 284. A Phosphothreonine; by CDK1 modification is found at threonine 287. A disordered region spans residues 345-499; that stretch reads GRPSLYVQRD…PWKLPRGSPQ (155 aa). At serine 348 the chain carries Phosphoserine. Residues 355-371 show a composition bias toward basic and acidic residues; that stretch reads MVQETQREEDHRREGLH. Phosphothreonine; by CDK1 is present on threonine 377. Serine 382 carries the post-translational modification Phosphoserine. The segment covering 392 to 417 has biased composition (low complexity); it reads ALSSDSILSPDSILSPAPDARAADPA. Phosphoserine; by PLK1 occurs at positions 394, 395, and 397. 2 positions are modified to phosphoserine: serine 406 and serine 436. Over residues 454-469 the composition is skewed to polar residues; the sequence is SGLSTVDTEAATSPKA. Serine 477 carries the post-translational modification Phosphoserine; by PLK1. The segment covering 478-488 has biased composition (polar residues); it reads ESSGKPMSTKQ. Phosphoserine occurs at positions 547 and 549. Positions 551–575 form a coiled coil; it reads DLLERERESVLRREREVAEERRNAL. 2 disordered regions span residues 575–607 and 629–651; these read LFPE…SYSV and PVDS…NPSD. Serine 581 bears the Phosphoserine; by PLK1 mark. Threonine 583 is subject to Phosphothreonine. The segment covering 589 to 607 has biased composition (polar residues); the sequence is DQNSRSSSQASGITGSYSV. Serine 592 bears the Phosphoserine; by PLK1 mark. Serine 681 is subject to Phosphoserine.

The protein belongs to the MISP family. Associates with F-actin. Interacts with DCTN1; this interaction regulates DCTN1 distribution at the cell cortex. Interacts with PTK2/FAK and MAPRE1. In terms of processing, phosphorylated by CDK1 and PLK1. CDK1 is the priming kinase for PLK1 phosphorylation. Phosphorylation by PLK1 is required for proper spindle orientation at metaphase.

It is found in the cell junction. It localises to the focal adhesion. Its subcellular location is the cytoplasm. The protein resides in the cytoskeleton. The protein localises to the cell cortex. In terms of biological role, plays a role in mitotic spindle orientation and mitotic progression. Regulates the distribution of dynactin at the cell cortex in a PLK1-dependent manner, thus stabilizing cortical and astral microtubule attachments required for proper mitotic spindle positioning. May link microtubules to the actin cytospkeleton and focal adhesions. May be required for directed cell migration and centrosome orientation. May also be necessary for proper stacking of the Golgi apparatus. The protein is Mitotic interactor and substrate of PLK1 of Pongo abelii (Sumatran orangutan).